We begin with the raw amino-acid sequence, 113 residues long: Cell cycle control protein 50C (113 aa).

The Cytoplasmic segment spans residues 1–34 (MEERAQHCLSRLLDNSALKQQELPIHRLYFTARR). A helical transmembrane segment spans residues 35-55 (VLFVFFATGIFCLCMGIILIL). Topologically, residues 56–113 (SARSTQEIEINYTRICANCAKLRENASNFDKECTCSIPFYLSGKMMVGEIQETRLTLH) are extracellular. Asn66 carries N-linked (GlcNAc...) asparagine glycosylation.

The protein belongs to the CDC50/LEM3 family. In terms of tissue distribution, specifically expressed in testis.

It localises to the membrane. The chain is Cell cycle control protein 50C from Homo sapiens (Human).